The chain runs to 380 residues: Crotonobetainyl-CoA reductase (380 aa).

Belongs to the acyl-CoA dehydrogenase family. Homotetramer. FAD is required as a cofactor.

The protein resides in the cytoplasm. It catalyses the reaction 4-(trimethylamino)butanoyl-CoA + oxidized [electron-transfer flavoprotein] + H(+) = crotonobetainyl-CoA + reduced [electron-transfer flavoprotein]. It functions in the pathway amine and polyamine metabolism; carnitine metabolism. Functionally, catalyzes the reduction of crotonobetainyl-CoA to gamma-butyrobetainyl-CoA. The protein is Crotonobetainyl-CoA reductase of Salmonella agona (strain SL483).